The following is a 97-amino-acid chain: Ataxin-7-like protein 3B (97 aa).

The disordered stretch occupies residues 76–97; that stretch reads SLPGDPGDGPQTELQRSPPEFQ. At Ser92 the chain carries Phosphoserine.

Belongs to the SGF11 family. Interacts strongly with ENY2. Interacts weakly with USP22.

It localises to the cytoplasm. In terms of biological role, by binding to ENY2, interferes with the nuclear functions of the deubiquitinase (DUB) module of the SAGA complex which consists of ENY2, ATXN7, ATXN7L3 and the histone deubiquitinating component USP22. Affects USP22 DUB activity toward histones indirectly by changing the subcellular distribution of ENY2 and altering ENY2 availability for ATXN7L3 interaction. Regulates H2B monoubiquitination (H2Bub1) levels through cytoplasmic sequestration of ENY2 resulting in loss of nuclear ENY2-ATXN7L3 association which destabilizes ATXN7L3. Affects protein expression levels of ENY2 and ATXN7L3. In Mus musculus (Mouse), this protein is Ataxin-7-like protein 3B (Atxn7l3b).